The following is a 96-amino-acid chain: Co-chaperonin GroES (96 aa).

This sequence belongs to the GroES chaperonin family. In terms of assembly, heptamer of 7 subunits arranged in a ring. Interacts with the chaperonin GroEL.

The protein resides in the cytoplasm. Functionally, together with the chaperonin GroEL, plays an essential role in assisting protein folding. The GroEL-GroES system forms a nano-cage that allows encapsulation of the non-native substrate proteins and provides a physical environment optimized to promote and accelerate protein folding. GroES binds to the apical surface of the GroEL ring, thereby capping the opening of the GroEL channel. This is Co-chaperonin GroES from Nitrosomonas eutropha (strain DSM 101675 / C91 / Nm57).